Here is a 508-residue protein sequence, read N- to C-terminus: Light-independent protochlorophyllide reductase subunit B (508 aa).

Aspartate 36 is a [4Fe-4S] cluster binding site. Aspartate 294 acts as the Proton donor in catalysis. 429–430 (GM) lines the substrate pocket.

Belongs to the ChlB/BchB/BchZ family. In terms of assembly, protochlorophyllide reductase is composed of three subunits; ChlL, ChlN and ChlB. Forms a heterotetramer of two ChlB and two ChlN subunits. [4Fe-4S] cluster serves as cofactor.

It carries out the reaction chlorophyllide a + oxidized 2[4Fe-4S]-[ferredoxin] + 2 ADP + 2 phosphate = protochlorophyllide a + reduced 2[4Fe-4S]-[ferredoxin] + 2 ATP + 2 H2O. Its pathway is porphyrin-containing compound metabolism; chlorophyll biosynthesis (light-independent). In terms of biological role, component of the dark-operative protochlorophyllide reductase (DPOR) that uses Mg-ATP and reduced ferredoxin to reduce ring D of protochlorophyllide (Pchlide) to form chlorophyllide a (Chlide). This reaction is light-independent. The NB-protein (ChlN-ChlB) is the catalytic component of the complex. The sequence is that of Light-independent protochlorophyllide reductase subunit B from Acaryochloris marina (strain MBIC 11017).